A 299-amino-acid polypeptide reads, in one-letter code: 4-hydroxy-3-methylbut-2-enyl diphosphate reductase (299 aa).

C12 serves as a coordination point for [4Fe-4S] cluster. 2 residues coordinate (2E)-4-hydroxy-3-methylbut-2-enyl diphosphate: H42 and H88. Dimethylallyl diphosphate contacts are provided by H42 and H88. Isopentenyl diphosphate contacts are provided by H42 and H88. C110 is a [4Fe-4S] cluster binding site. H138 is a binding site for (2E)-4-hydroxy-3-methylbut-2-enyl diphosphate. H138 is a binding site for dimethylallyl diphosphate. H138 is a binding site for isopentenyl diphosphate. The active-site Proton donor is the E140. Residue T177 coordinates (2E)-4-hydroxy-3-methylbut-2-enyl diphosphate. Residue C205 participates in [4Fe-4S] cluster binding. (2E)-4-hydroxy-3-methylbut-2-enyl diphosphate-binding residues include S233, N235, and S277. Dimethylallyl diphosphate-binding residues include S233, N235, and S277. Residues S233, N235, and S277 each contribute to the isopentenyl diphosphate site.

This sequence belongs to the IspH family. The cofactor is [4Fe-4S] cluster.

It carries out the reaction isopentenyl diphosphate + 2 oxidized [2Fe-2S]-[ferredoxin] + H2O = (2E)-4-hydroxy-3-methylbut-2-enyl diphosphate + 2 reduced [2Fe-2S]-[ferredoxin] + 2 H(+). The catalysed reaction is dimethylallyl diphosphate + 2 oxidized [2Fe-2S]-[ferredoxin] + H2O = (2E)-4-hydroxy-3-methylbut-2-enyl diphosphate + 2 reduced [2Fe-2S]-[ferredoxin] + 2 H(+). It participates in isoprenoid biosynthesis; dimethylallyl diphosphate biosynthesis; dimethylallyl diphosphate from (2E)-4-hydroxy-3-methylbutenyl diphosphate: step 1/1. The protein operates within isoprenoid biosynthesis; isopentenyl diphosphate biosynthesis via DXP pathway; isopentenyl diphosphate from 1-deoxy-D-xylulose 5-phosphate: step 6/6. Functionally, catalyzes the conversion of 1-hydroxy-2-methyl-2-(E)-butenyl 4-diphosphate (HMBPP) into a mixture of isopentenyl diphosphate (IPP) and dimethylallyl diphosphate (DMAPP). Acts in the terminal step of the DOXP/MEP pathway for isoprenoid precursor biosynthesis. The chain is 4-hydroxy-3-methylbut-2-enyl diphosphate reductase from Malacoplasma penetrans (strain HF-2) (Mycoplasma penetrans).